Here is a 137-residue protein sequence, read N- to C-terminus: Large ribosomal subunit protein uL16 (137 aa).

The protein belongs to the universal ribosomal protein uL16 family. As to quaternary structure, part of the 50S ribosomal subunit.

In terms of biological role, binds 23S rRNA and is also seen to make contacts with the A and possibly P site tRNAs. The chain is Large ribosomal subunit protein uL16 from Wolbachia pipientis subsp. Culex pipiens (strain wPip).